A 240-amino-acid chain; its full sequence is Uridylate kinase (240 aa).

13-16 (KASG) is a binding site for ATP. The tract at residues 21-26 (GSQGFG) is involved in allosteric activation by GTP. G55 is a UMP binding site. G56 and R60 together coordinate ATP. Residues D75 and 136–143 (TGNPFFTT) contribute to the UMP site. Positions 163, 164, 169, and 172 each coordinate ATP.

It belongs to the UMP kinase family. As to quaternary structure, homohexamer.

Its subcellular location is the cytoplasm. It carries out the reaction UMP + ATP = UDP + ADP. It functions in the pathway pyrimidine metabolism; CTP biosynthesis via de novo pathway; UDP from UMP (UMPK route): step 1/1. With respect to regulation, allosterically activated by GTP. Inhibited by UTP. Functionally, catalyzes the reversible phosphorylation of UMP to UDP. The polypeptide is Uridylate kinase (Brucella melitensis biotype 1 (strain ATCC 23456 / CCUG 17765 / NCTC 10094 / 16M)).